Reading from the N-terminus, the 68-residue chain is uncharacterized protein (68 aa).

An N-terminal signal peptide occupies residues 1-21 (MELYREYPAWLIFLRRTYAVA).

This is an uncharacterized protein from Escherichia coli O157:H7.